A 166-amino-acid chain; its full sequence is Phosphopantetheine adenylyltransferase (166 aa).

Residue Thr-10 coordinates substrate. Residues 10–11 and His-18 each bind ATP; that span reads TF. The substrate site is built by Lys-42, Leu-75, and Arg-89. ATP contacts are provided by residues 90–92, Glu-100, and 125–131; these read GVR and YTYVAST.

Belongs to the bacterial CoaD family. In terms of assembly, homohexamer. It depends on Mg(2+) as a cofactor.

The protein resides in the cytoplasm. The catalysed reaction is (R)-4'-phosphopantetheine + ATP + H(+) = 3'-dephospho-CoA + diphosphate. It functions in the pathway cofactor biosynthesis; coenzyme A biosynthesis; CoA from (R)-pantothenate: step 4/5. In terms of biological role, reversibly transfers an adenylyl group from ATP to 4'-phosphopantetheine, yielding dephospho-CoA (dPCoA) and pyrophosphate. The protein is Phosphopantetheine adenylyltransferase of Chlorobaculum parvum (strain DSM 263 / NCIMB 8327) (Chlorobium vibrioforme subsp. thiosulfatophilum).